The following is a 1059-amino-acid chain: Potassium transporter TRK1 (1059 aa).

Residues 1–46 lie on the Cytoplasmic side of the membrane; that stretch reads MLYRVSGFYKRHTRNFTNIDYGYYIRNFIHHIASKIYPYAKVVLPN. A helical membrane pass occupies residues 47 to 67; the sequence is FRAAHYFYILTLVILGSILVY. At 68–73 the chain is on the extracellular side; that stretch reads PVKTCA. Residues 74-90 lie within the membrane without spanning it; sequence YIDVLFFTAGASTQAGL. The Extracellular segment spans residues 91–99; that stretch reads NTVNVNDLS. A helical transmembrane segment spans residues 100-122; the sequence is LYQQIVLYLLATLATPIFIHGSL. Residues 123-625 lie on the Cytoplasmic side of the membrane; it reads LFVRLYYFER…LGGIEYRAVK (503 aa). Disordered regions lie at residues 180–276, 304–350, and 404–574; these read REAE…IDPE, IGSP…EDED, and PWTS…SIEN. Residues 186–203 show a composition bias toward low complexity; that stretch reads SSSSPQSSSSQTSQPVST. The span at 236-245 shows a compositional bias: basic and acidic residues; sequence EKIHFEEPQR. The segment covering 335-344 has biased composition (polar residues); the sequence is PATNSVGTGN. Residues 412–423 are compositionally biased toward low complexity; that stretch reads TLSNSSKKGSLS. Acidic residues-rich tracts occupy residues 428–449 and 469–490; these read DTED…SDIS and YEED…DDGE. Residues 524 to 536 show a composition bias toward polar residues; the sequence is RSNTLDTPQQNTS. The span at 540 to 552 shows a compositional bias: basic residues; the sequence is KIRKKAPKRKTPR. The span at 556–566 shows a compositional bias: polar residues; sequence NASFNQHSNVS. A helical membrane pass occupies residues 626 to 649; that stretch reads LLIKIIVVYYVGFNIIPGVMLSIW. The Extracellular portion of the chain corresponds to 650-668; it reads IYCMPHYKNLMISSSISPA. Residues 669-685 lie within the membrane without spanning it; it reads WWAFFTSQSSFNDLGLT. At 686–696 the chain is on the extracellular side; it reads LTSNSMMSFNQ. Residues 697 to 713 traverse the membrane as a helical segment; sequence NAFVQILCSFLIVIGNT. The Cytoplasmic segment spans residues 714 to 757; it reads GFPILLRFIIWVMFKTARPLSLYKESLGFLLDHPRRCFTLLFPS. The chain crosses the membrane as a helical span at residues 758–781; sequence VPTWWLFFILVVLNGFDLVIFCIL. The Extracellular portion of the chain corresponds to 782 to 796; it reads DLHDDTFKGVDMGYR. The stretch at 797–813 is an intramembrane region; the sequence is VLNGLFQAFCTRTVGFS. Topologically, residues 814-820 are extracellular; that stretch reads VMDLSQL. A helical membrane pass occupies residues 821–844; it reads HAATQVSYLIMMYISVLPIAISVR. Residues 845–877 lie on the Cytoplasmic side of the membrane; sequence RTNVYEEQSLGVYAKENAEGVDESAPSNYVGSH. A helical membrane pass occupies residues 878-899; it reads LRNQLSYDLWYICLGLFIICIA. At 900-912 the chain is on the extracellular side; it reads EGKRLKEQDLRFS. Residues 913-931 lie within the membrane without spanning it; sequence IFAVLFEIVSAYGTVGMSM. Over 932-945 the chain is Extracellular; the sequence is GYPGVDCSLSGEFN. Residues 946-968 traverse the membrane as a helical segment; that stretch reads VISKLVIIAMMIRGRHRGLPYTI. At 969-1059 the chain is on the cytoplasmic side; that stretch reads DRAIMLPNAA…RYVVRTVSEV (91 aa).

Belongs to the TrkH potassium transport family.

The protein resides in the cell membrane. The catalysed reaction is K(+)(in) = K(+)(out). The enzyme catalyses chloride(in) = chloride(out). TRK1-mediated chloride conductance is blocked by 4,4'-diisothiocyanatostilbene-2,2'-disulfonic acid. Functionally, potassium transporter that mediates K(+) influx, as well as Cl(-) efflux as a secondary function. TRK1 is the major K(+) uptake transporter that regulates membrane potential and intracellular pH. The TRK1-mediated Cl(-) efflux should serve as a Cl(-) detoxification route and may play a role in sustaining C.albicans on mammalian epithelial surfaces, or in physiological saline solutions such as saliva. In terms of biological role, mediates candidacidal activities of cysteine-free peptides, but not of defensins. The hallmark of salivary gland-secreted histatin-5 (Hst 5) killing of C.albicans is the rapid efflux of cellular ATP and other small nucleotides and ions from the cell as well as concurrent intracellular uptake of propidium iodide (PI). TRK1 is the channel for Hst 5-induced killing and histatin-5 may directly or indirectly alter TRK1 function, allowing the efflux of larger anions, including ATP, and the influx of small cationic dyes, such as PI. This chain is Potassium transporter TRK1, found in Candida albicans (Yeast).